A 537-amino-acid polypeptide reads, in one-letter code: CTP synthase (537 aa).

The amidoligase domain stretch occupies residues 1-265; it reads MVHFIFVTGG…DNKVLKFFNI (265 aa). Serine 13 provides a ligand contact to CTP. Residue serine 13 participates in UTP binding. ATP contacts are provided by residues 14-19 and aspartate 71; that span reads SLGKGL. Aspartate 71 and glutamate 139 together coordinate Mg(2+). CTP-binding positions include 146–148 and lysine 222; that span reads DIE. UTP is bound at residue lysine 222. The region spanning 290–536 is the Glutamine amidotransferase type-1 domain; that stretch reads RIAIIAKYHK…IKAAIEYNKC (247 aa). Glycine 352 contributes to the L-glutamine binding site. The active-site Nucleophile; for glutamine hydrolysis is cysteine 379. L-glutamine contacts are provided by residues 380–383, glutamate 403, and arginine 464; that span reads FGMQ. Active-site residues include histidine 509 and glutamate 511.

It belongs to the CTP synthase family. In terms of assembly, homotetramer.

It catalyses the reaction UTP + L-glutamine + ATP + H2O = CTP + L-glutamate + ADP + phosphate + 2 H(+). The enzyme catalyses L-glutamine + H2O = L-glutamate + NH4(+). It carries out the reaction UTP + NH4(+) + ATP = CTP + ADP + phosphate + 2 H(+). Its pathway is pyrimidine metabolism; CTP biosynthesis via de novo pathway; CTP from UDP: step 2/2. Allosterically activated by GTP, when glutamine is the substrate; GTP has no effect on the reaction when ammonia is the substrate. The allosteric effector GTP functions by stabilizing the protein conformation that binds the tetrahedral intermediate(s) formed during glutamine hydrolysis. Inhibited by the product CTP, via allosteric rather than competitive inhibition. Catalyzes the ATP-dependent amination of UTP to CTP with either L-glutamine or ammonia as the source of nitrogen. Regulates intracellular CTP levels through interactions with the four ribonucleotide triphosphates. The protein is CTP synthase of Rickettsia rickettsii (strain Iowa).